The following is a 266-amino-acid chain: Protein-ADP-ribose hydrolase (266 aa).

The Macro domain maps to 74-265 (TDLKDLKPIK…LYKEAFNRDA (192 aa)). Residues Asp-93, Ile-94, and Asn-107 each coordinate ADP-D-ribose. Cys-113, His-118, and Cys-120 together coordinate Zn(2+). Cys-120, Ile-121, Asp-122, Ser-212, Thr-213, Gly-214, and Phe-216 together coordinate ADP-D-ribose.

Belongs to the MacroD-type family. Zn-Macro subfamily. Zn(2+) serves as cofactor.

It catalyses the reaction 4-O-(ADP-D-ribosyl)-L-aspartyl-[protein] + H2O = L-aspartyl-[protein] + ADP-D-ribose + H(+). In terms of biological role, ADP-ribosylhydrolase that specifically reverses the SirTM-mediated mono-ADP-ribosylation at an asparatate residue of GcvH-L, by releasing ADP-ribose from the target protein. May play a role in the regulation of the response to host-induced oxidative stress. This is Protein-ADP-ribose hydrolase from Staphylococcus aureus (strain COL).